We begin with the raw amino-acid sequence, 81 residues long: Photosystem I iron-sulfur center (81 aa).

4Fe-4S ferredoxin-type domains lie at 2–31 and 39–68; these read SHTV…MAPW and VASA…VRVY. 8 residues coordinate [4Fe-4S] cluster: cysteine 11, cysteine 14, cysteine 17, cysteine 21, cysteine 48, cysteine 51, cysteine 54, and cysteine 58.

As to quaternary structure, the eukaryotic PSI reaction center is composed of at least 11 subunits. It depends on [4Fe-4S] cluster as a cofactor.

The protein resides in the plastid. It localises to the chloroplast thylakoid membrane. The catalysed reaction is reduced [plastocyanin] + hnu + oxidized [2Fe-2S]-[ferredoxin] = oxidized [plastocyanin] + reduced [2Fe-2S]-[ferredoxin]. Its function is as follows. Apoprotein for the two 4Fe-4S centers FA and FB of photosystem I (PSI); essential for photochemical activity. FB is the terminal electron acceptor of PSI, donating electrons to ferredoxin. The C-terminus interacts with PsaA/B/D and helps assemble the protein into the PSI complex. Required for binding of PsaD and PsaE to PSI. PSI is a plastocyanin/cytochrome c6-ferredoxin oxidoreductase, converting photonic excitation into a charge separation, which transfers an electron from the donor P700 chlorophyll pair to the spectroscopically characterized acceptors A0, A1, FX, FA and FB in turn. The protein is Photosystem I iron-sulfur center of Tupiella akineta (Green alga).